The following is a 2197-amino-acid chain: Activating signal cointegrator 1 complex subunit 3 (2197 aa).

Phosphoserine is present on S12. Coiled coils occupy residues 18–80 (KQDN…AKQI) and 328–356 (IQSE…KAGE). The Helicase ATP-binding 1 domain maps to 487-670 (DTAYNTNENM…FLHVNPYIGL (184 aa)). 500 to 507 (APTGAGKT) is a binding site for ATP. K573 is modified (N6-acetyllysine). The DEVH box motif lies at 612-615 (DEVH). The region spanning 697–915 (QLNNMDEVCY…GTVTNVEEAV (219 aa)) is the Helicase C-terminal 1 domain. Positions 979–1288 (STDLGRTASH…GAEAVCIINF (310 aa)) constitute an SEC63 1 domain. The region spanning 1337–1512 (HTLYHTDCNV…WLNIKQMGLF (176 aa)) is the Helicase ATP-binding 2 domain. 1350 to 1357 (APTGSGKT) lines the ATP pocket. Residues 1454-1457 (DEIH) carry the DEIH box motif. Residues 1565 to 1739 (RMLSSMTKLE…VLSDHLNAEI (175 aa)) form the Helicase C-terminal 2 domain. Residues 1812–2175 (PLTCGRIASY…YLGLDQQYDI (364 aa)) form the SEC63 2 domain.

The protein belongs to the helicase family. In terms of assembly, identified in the ASCC complex that contains ASCC1, ASCC2 and ASCC3. Functions as a scaffolding subunit that interacts directly with both ASCC1 and ASCC2. Interacts directly with ALKBH3, and thereby recruits ALKBH3 to the ASCC complex. Part of the ASC-1/TRIP4 complex, that contains TRIP4, ASCC1, ASCC2 and ASCC3. Part of the RQT (ribosome quality control trigger) complex, that contains ASCC2, ASCC3 and TRIP4. Associates with ribosomes; recruited to collided ribosomes. Interacts with ZCCHC4. Interacts with ZNF598. Interacts with RPS3.

Its subcellular location is the nucleus. The protein localises to the nucleus speckle. It localises to the cytoplasm. It is found in the cytosol. It catalyses the reaction Couples ATP hydrolysis with the unwinding of duplex DNA by translocating in the 3'-5' direction.. The enzyme catalyses ATP + H2O = ADP + phosphate + H(+). Functionally, ATPase involved both in DNA repair and rescue of stalled ribosomes. 3'-5' DNA helicase involved in repair of alkylated DNA: promotes DNA unwinding to generate single-stranded substrate needed for ALKBH3, enabling ALKBH3 to process alkylated N3-methylcytosine (3mC) within double-stranded regions. Also involved in activation of the ribosome quality control (RQC) pathway, a pathway that degrades nascent peptide chains during problematic translation. Drives the splitting of stalled ribosomes that are ubiquitinated in a ZNF598-dependent manner, as part of the ribosome quality control trigger (RQT) complex. Part of the ASC-1 complex that enhances NF-kappa-B, SRF and AP1 transactivation. This is Activating signal cointegrator 1 complex subunit 3 (Ascc3) from Rattus norvegicus (Rat).